Here is a 419-residue protein sequence, read N- to C-terminus: Cysteine desulfurase (419 aa).

Pyridoxal 5'-phosphate contacts are provided by residues alanine 69–threonine 70, asparagine 157, glutamine 185, and serine 205–histidine 207. Lysine 208 carries the N6-(pyridoxal phosphate)lysine modification. Residue threonine 245 coordinates pyridoxal 5'-phosphate. Catalysis depends on cysteine 333, which acts as the Cysteine persulfide intermediate. A [2Fe-2S] cluster-binding site is contributed by cysteine 333. The disordered stretch occupies residues threonine 392–serine 419. Positions alanine 404–serine 413 are enriched in polar residues.

Belongs to the class-V pyridoxal-phosphate-dependent aminotransferase family. NifS/IscS subfamily. Homodimer. Requires pyridoxal 5'-phosphate as cofactor.

It carries out the reaction (sulfur carrier)-H + L-cysteine = (sulfur carrier)-SH + L-alanine. Its function is as follows. Catalyzes the removal of elemental sulfur atoms from cysteine to produce alanine. Seems to participate in the biosynthesis of the nitrogenase metalloclusters by providing the inorganic sulfur required for the Fe-S core formation. The polypeptide is Cysteine desulfurase (Frankia sp. (strain EuIK1)).